Here is a 101-residue protein sequence, read N- to C-terminus: NAD(P)H-quinone oxidoreductase subunit 4L, chloroplastic (101 aa).

A run of 3 helical transmembrane segments spans residues 2-22, 27-46, and 61-81; these read MLEH…YGLI, MVRA…MNLI, and IFSI…PAIV.

Belongs to the complex I subunit 4L family. NDH is composed of at least 16 different subunits, 5 of which are encoded in the nucleus.

It is found in the plastid. Its subcellular location is the chloroplast thylakoid membrane. It catalyses the reaction a plastoquinone + NADH + (n+1) H(+)(in) = a plastoquinol + NAD(+) + n H(+)(out). The enzyme catalyses a plastoquinone + NADPH + (n+1) H(+)(in) = a plastoquinol + NADP(+) + n H(+)(out). Functionally, NDH shuttles electrons from NAD(P)H:plastoquinone, via FMN and iron-sulfur (Fe-S) centers, to quinones in the photosynthetic chain and possibly in a chloroplast respiratory chain. The immediate electron acceptor for the enzyme in this species is believed to be plastoquinone. Couples the redox reaction to proton translocation, and thus conserves the redox energy in a proton gradient. This is NAD(P)H-quinone oxidoreductase subunit 4L, chloroplastic from Drimys granadensis.